The primary structure comprises 559 residues: DNA ligase (559 aa).

ATP is bound at residue Glu-247. Lys-249 functions as the N6-AMP-lysine intermediate in the catalytic mechanism. ATP contacts are provided by Arg-254, Arg-269, Glu-299, Phe-339, Arg-414, and Lys-420.

It belongs to the ATP-dependent DNA ligase family. In terms of assembly, monomer. The cofactor is Mg(2+).

The catalysed reaction is ATP + (deoxyribonucleotide)n-3'-hydroxyl + 5'-phospho-(deoxyribonucleotide)m = (deoxyribonucleotide)n+m + AMP + diphosphate.. It carries out the reaction NAD(+) + (deoxyribonucleotide)n-3'-hydroxyl + 5'-phospho-(deoxyribonucleotide)m = (deoxyribonucleotide)n+m + AMP + beta-nicotinamide D-nucleotide.. In terms of biological role, DNA ligase that seals nicks in double-stranded DNA during DNA replication, DNA recombination and DNA repair. Can also use NAD, but less efficiently than ATP. The protein is DNA ligase of Thermococcus kodakarensis (strain ATCC BAA-918 / JCM 12380 / KOD1) (Pyrococcus kodakaraensis (strain KOD1)).